We begin with the raw amino-acid sequence, 72 residues long: Translation initiation factor IF-1 (72 aa).

An S1-like domain is found at 1–72 (MSKDDCIEFE…TKGRIIYRMK (72 aa)).

This sequence belongs to the IF-1 family. As to quaternary structure, component of the 30S ribosomal translation pre-initiation complex which assembles on the 30S ribosome in the order IF-2 and IF-3, IF-1 and N-formylmethionyl-tRNA(fMet); mRNA recruitment can occur at any time during PIC assembly.

The protein localises to the cytoplasm. Functionally, one of the essential components for the initiation of protein synthesis. Stabilizes the binding of IF-2 and IF-3 on the 30S subunit to which N-formylmethionyl-tRNA(fMet) subsequently binds. Helps modulate mRNA selection, yielding the 30S pre-initiation complex (PIC). Upon addition of the 50S ribosomal subunit IF-1, IF-2 and IF-3 are released leaving the mature 70S translation initiation complex. The sequence is that of Translation initiation factor IF-1 from Xylella fastidiosa (strain Temecula1 / ATCC 700964).